Reading from the N-terminus, the 375-residue chain is 23S rRNA (uracil(747)-C(5))-methyltransferase RlmC (375 aa).

[4Fe-4S] cluster contacts are provided by C3, C11, C14, and C87. Residues Q212, F241, E262, and N307 each contribute to the S-adenosyl-L-methionine site. The active-site Nucleophile is C334.

This sequence belongs to the class I-like SAM-binding methyltransferase superfamily. RNA M5U methyltransferase family. RlmC subfamily.

The enzyme catalyses uridine(747) in 23S rRNA + S-adenosyl-L-methionine = 5-methyluridine(747) in 23S rRNA + S-adenosyl-L-homocysteine + H(+). Its function is as follows. Catalyzes the formation of 5-methyl-uridine at position 747 (m5U747) in 23S rRNA. The protein is 23S rRNA (uracil(747)-C(5))-methyltransferase RlmC of Shigella sonnei (strain Ss046).